The primary structure comprises 670 residues: Probable potassium transport system protein Kup 1 (670 aa).

Transmembrane regions (helical) follow at residues 14–34, 58–78, 101–121, 147–167, 175–195, 196–216, 220–240, 252–272, 294–314, 345–365, 374–394, 403–423, and 427–447; these read GAGF…SPLY, LSLI…WIAL, WLII…ALTP, LPIV…QRFG, FGPV…INLF, GDFS…LLSP, AGIF…ALYS, VSWP…GAWL, LIIF…QALI, LYIP…VVYF, AYGL…TVYL, VLVG…FAAS, and FMHG…VMAI.

This sequence belongs to the HAK/KUP transporter (TC 2.A.72) family.

The protein resides in the cell membrane. The catalysed reaction is K(+)(in) + H(+)(in) = K(+)(out) + H(+)(out). Its function is as follows. Transport of potassium into the cell. Likely operates as a K(+):H(+) symporter. This is Probable potassium transport system protein Kup 1 from Lactococcus lactis subsp. lactis (strain IL1403) (Streptococcus lactis).